The primary structure comprises 339 residues: Senescence-specific cysteine protease SAG39 (339 aa).

Positions 1-23 (MAMAKALLFAILGCLCLCSAVLA) are cleaved as a signal peptide. 3 cysteine pairs are disulfide-bonded: C144–C187, C178–C220, and C276–C328. Residue C147 is part of the active site. Residues H282 and N303 contribute to the active site.

This sequence belongs to the peptidase C1 family. In terms of tissue distribution, low expression in mature leaves.

The protein localises to the vacuole. In terms of biological role, cysteine protease that may have a developmental senescence specific cell death function during apoptosis, heavy metal detoxification, and hypersensitive response. The chain is Senescence-specific cysteine protease SAG39 from Oryza sativa subsp. japonica (Rice).